Consider the following 506-residue polypeptide: Tabersonine 3-oxygenase (506 aa).

The Lumenal portion of the chain corresponds to 1 to 5; the sequence is MEFHE. A helical membrane pass occupies residues 6–26; the sequence is SSPFVFITRGFIFIAISIAVL. The Cytoplasmic portion of the chain corresponds to 27–506; the sequence is RRIISKKTKT…DLQLIATSYA (480 aa). Cysteine 450 is a binding site for heme.

The protein belongs to the cytochrome P450 family. Heme serves as cofactor. Expressed in leaf epidermis.

It localises to the endoplasmic reticulum membrane. It catalyses the reaction 16-methoxytabersonine + reduced [NADPH--hemoprotein reductase] + O2 = (3R)-1,2-didehydro-3-hydroxy-16-methoxy-2,3-dihydrotabersonine + oxidized [NADPH--hemoprotein reductase] + H2O + H(+). The catalysed reaction is (-)-tabersonine + reduced [NADPH--hemoprotein reductase] + O2 = (3R)-1,2-didehydro-3-hydroxy-2,3-dihydrotabersonine + oxidized [NADPH--hemoprotein reductase] + H2O + H(+). The protein operates within alkaloid biosynthesis; vindoline biosynthesis. In terms of biological role, cytochrome P450 catalyzing the monooxygenation of 16-methoxytabersonine, 16-hydroxytabersonine and tabersonine, but not of 2,3-dihydrotabersonine. Converts the C2,C3 alkene of tabersonine and 16-methoxytabersonine to the epoxides, which then spontaneously open to form the corresponding imine alcohols. Inactive in converting amyrin to ursolic acid. This Catharanthus roseus (Madagascar periwinkle) protein is Tabersonine 3-oxygenase.